Here is a 1141-residue protein sequence, read N- to C-terminus: DNA polymerase 120R (1141 aa).

Belongs to the DNA polymerase type-B family.

The enzyme catalyses DNA(n) + a 2'-deoxyribonucleoside 5'-triphosphate = DNA(n+1) + diphosphate. In terms of biological role, DNA-directed DNA polymerase involved in viral DNA replication. The protein is DNA polymerase 120R of Invertebrate iridescent virus 3 (IIV-3).